The chain runs to 227 residues: Glutathione S-transferase U27 (227 aa).

The GST N-terminal domain occupies 4 to 84 (EEVVVLNFWP…YIDEVWKDDK (81 aa)). Glutathione contacts are provided by residues 14–15 (SM), 41–42 (QK), 55–56 (KI), and 68–69 (ES). Residues 92–217 (DPYQKSQCRF…LKIFDRVTQI (126 aa)) enclose the GST C-terminal domain.

Belongs to the GST superfamily. Tau family.

It is found in the cytoplasm. Its subcellular location is the cytosol. The enzyme catalyses RX + glutathione = an S-substituted glutathione + a halide anion + H(+). Functionally, may be involved in the conjugation of reduced glutathione to a wide number of exogenous and endogenous hydrophobic electrophiles and have a detoxification role against certain herbicides. This chain is Glutathione S-transferase U27 (GSTU27), found in Arabidopsis thaliana (Mouse-ear cress).